A 594-amino-acid chain; its full sequence is 4-alpha-glucanotransferase DPE1, chloroplastic/amyloplastic (594 aa).

The transit peptide at 1-37 directs the protein to the chloroplast; the sequence is MATLSLPLPHLTQAIPARARPRPRPLRGIPARLLSCR.

The protein belongs to the disproportionating enzyme family.

Its subcellular location is the plastid. The protein localises to the chloroplast. The protein resides in the amyloplast. The catalysed reaction is Transfers a segment of a (1-&gt;4)-alpha-D-glucan to a new position in an acceptor, which may be glucose or a (1-&gt;4)-alpha-D-glucan.. Chloroplastic alpha-glucanotransferase involved in maltotriose metabolism. In Oryza sativa subsp. japonica (Rice), this protein is 4-alpha-glucanotransferase DPE1, chloroplastic/amyloplastic (DPE1).